The chain runs to 1333 residues: MLDVNVFDELRIGLATADDIRRWSKGEVKKPETINYRTLKPEKDGLFCERIFGPTRDWECACGKYKRVRYKGIICERCGVEVTKSKVRRERMGHIELAAPVTHIWYFKGVPSRLGYLLDLAPKDLDLIIYFGANIITSVDEEARHSDQSTLEAEMLLEKKDVEADAESEIAERAEKLEEDLAELEAAGAKADARRKVQNAAEKEMQHIRERAEREIDRLEEIWQTFIKLAPKQMIRDEKLYDELVDRYEDYFTGGMGAESIQTLIRGFDLDAEAEELRTIINEGKGQKKMRALKRLKVVAAFQRSGNDPAGMVLNAIPVIPPELRPMVQLDGGRFATSDLNDLYRRVINRNNRLKRMIELGAPEIIVNNEKRMLQESVDALFDNGRRGRPVTGPGNRPLKSLSDLLKGKQGRFRQNLLGKRVDYSGRSVIIVGPQLRLHECGLPKLMALELFKPFVMKRLVENEYAQNIKSAKRMVERQRPEVWDVLEEAISEHPVMLNRAPTLHRLGIQAFEPVLVEGKAIQLHPLACEAFNADFDGDQMAVHLPLSAEAQAEARILMLASNNILSPASGKPLAMPRLDMVTGLYYLTLKKSPEEFGGQGAYQPADENGPEKGVYSSYAEAIMAYDRGVLGLQAPVRIRLDHLRPPAELENELFPEGWNQGDTWLAETTLGRVMFNEILPWNYPYLEGIMVRKGGGADKIMLGDVVNDLAARYPMITVAQTMDKMKDAGFYWSTRSGVTIAMSDVLVLPNKDEILDRYEAAARQIETKYNRGKLTGRERYDRLVELWKDATDEVGQAVEDIYPDDNPIPMIVKSGAAGNMRQIWTLAGMKGMVVNSKGDYITRPIKTSFREGLTVLEYFNNSHGSRKGLADTALRTADSGYLTRRLVDVAQDVIVRVEDCGTRQGVRVPVAAEVLDATGAVSGYTRHDLIETSVSGRVLAGDATNAEGEVILAAGSDLTELNIDLLVEAGIQQVKVRSVLTCQTPTGVCAKCYGKSMASGKQVDIGEAVGIVAAQSIGEPGTQLTMRTFHQGGVGGDITGGLPRVQELFEARVPKNLAPIASADGVIHLEDEGNFYTLTLVPDDGSDNVVYDKLSKRQGLASIRVPMEHNPAAFIERTLAEGDHVTVGTRLLRGAAAPHDVLEVLGRRGVEQHLIDEVQAVYRAQGVAIHDKHIEIIIRQMLRRGTVIESGSTEFLPGSLVDLSEAKLANSEAIANGGQPAELRSEIMGITKASLATESWLSAASFQETTRVLTDAAINKRSDKLIGLKENVIIGKLIPAGTGISRYRNISIKPTEAARNAAYSIPTYGESIYGDDGFGEFTGASVPLDEAF.

Residues cysteine 60, cysteine 62, cysteine 75, and cysteine 78 each coordinate Zn(2+). Mg(2+) is bound by residues aspartate 535, aspartate 537, and aspartate 539. Positions 901, 983, 990, and 993 each coordinate Zn(2+).

It belongs to the RNA polymerase beta' chain family. As to quaternary structure, the RNAP catalytic core consists of 2 alpha, 1 beta, 1 beta' and 1 omega subunit. When a sigma factor is associated with the core the holoenzyme is formed, which can initiate transcription. Mg(2+) serves as cofactor. It depends on Zn(2+) as a cofactor.

The catalysed reaction is RNA(n) + a ribonucleoside 5'-triphosphate = RNA(n+1) + diphosphate. In terms of biological role, DNA-dependent RNA polymerase catalyzes the transcription of DNA into RNA using the four ribonucleoside triphosphates as substrates. The polypeptide is DNA-directed RNA polymerase subunit beta' (Corynebacterium efficiens (strain DSM 44549 / YS-314 / AJ 12310 / JCM 11189 / NBRC 100395)).